A 305-amino-acid chain; its full sequence is Homoserine O-acetyltransferase (305 aa).

The active-site Acyl-thioester intermediate is C142. Positions 163 and 192 each coordinate substrate. H235 (proton acceptor) is an active-site residue. E237 is a catalytic residue. Substrate is bound at residue R249.

This sequence belongs to the MetA family.

Its subcellular location is the cytoplasm. It carries out the reaction L-homoserine + acetyl-CoA = O-acetyl-L-homoserine + CoA. Its pathway is amino-acid biosynthesis; L-methionine biosynthesis via de novo pathway; O-acetyl-L-homoserine from L-homoserine: step 1/1. In terms of biological role, transfers an acetyl group from acetyl-CoA to L-homoserine, forming acetyl-L-homoserine. This Bacteroides fragilis (strain ATCC 25285 / DSM 2151 / CCUG 4856 / JCM 11019 / LMG 10263 / NCTC 9343 / Onslow / VPI 2553 / EN-2) protein is Homoserine O-acetyltransferase.